Reading from the N-terminus, the 87-residue chain is Omega-lycotoxin-Am1g (87 aa).

The signal sequence occupies residues Met-1–Cys-17. The propeptide occupies Gln-18–Arg-40. 4 disulfide bridges follow: Cys-44/Cys-59, Cys-51/Cys-64, Cys-58/Cys-84, and Cys-66/Cys-82.

This sequence belongs to the neurotoxin omega-lctx family. As to expression, expressed by the venom gland.

The protein localises to the secreted. Functionally, modulates Cav2.1/CACNA1A voltage-gated calcium channels (P/Q-type currents) in rat cerebellar Purkinje cells and hippocampal CA1-CA3 neurons. At saturating concentrations (&gt;10 nM) decelerates activation kinetics and slightly increases peak amplitude without affecting deactivation kinetics. In vivo, does not cause death when intravenously injected into mice. In rat models, through its activity on Cav2.1/CACNA1A, has an ameliorative effect on memory defects provoked by hyperstimulation of N-methyl-D-aspartate receptors (NMDARs) in the hippocampus. This is Omega-lycotoxin-Am1g from Alopecosa marikovskyi (Wolf spider).